Reading from the N-terminus, the 148-residue chain is Deoxyuridine 5'-triphosphate nucleotidohydrolase (148 aa).

Substrate contacts are provided by residues 68–70 (RSG), N81, 85–87 (TVD), and K95.

Belongs to the dUTPase family. Mg(2+) serves as cofactor.

It carries out the reaction dUTP + H2O = dUMP + diphosphate + H(+). The protein operates within pyrimidine metabolism; dUMP biosynthesis; dUMP from dCTP (dUTP route): step 2/2. In terms of biological role, this enzyme is involved in nucleotide metabolism: it produces dUMP, the immediate precursor of thymidine nucleotides and it decreases the intracellular concentration of dUTP so that uracil cannot be incorporated into DNA. This Caldanaerobacter subterraneus subsp. tengcongensis (strain DSM 15242 / JCM 11007 / NBRC 100824 / MB4) (Thermoanaerobacter tengcongensis) protein is Deoxyuridine 5'-triphosphate nucleotidohydrolase.